The chain runs to 315 residues: ADP/ATP translocase 4 (315 aa).

Residues 1-19 (MHREPAKKKAEKRLFDASS) are Mitochondrial intermembrane-facing. A Solcar 1 repeat occupies 18-110 (SSFGKDLLAG…FAFKDKYKQL (93 aa)). The chain crosses the membrane as a helical span at residues 20-49 (FGKDLLAGGVAAAVSKTAVAPIERVKLLLQ). Over 50–86 (VQASSKQISPEARYKGMVDCLVRIPREQGFFSFWRGN) the chain is Mitochondrial matrix. A helical membrane pass occupies residues 87-111 (LANVIRYFPTQALNFAFKDKYKQLF). Residues R92 and K104 each coordinate ADP. The Mitochondrial intermembrane portion of the chain corresponds to 112 to 121 (MSGVNKEKQF). A helical transmembrane segment spans residues 122 to 142 (WRWFLANLASGGAAGATSLCV). 2 Solcar repeats span residues 123–213 (RWFL…VKGL) and 220–307 (TPFL…IKEF). Over 143 to 190 (VYPLDFARTRLGVDIGKGPEERQFKGLGDCIMKIAKSDGIAGLYQGFG) the chain is Mitochondrial matrix. A helical membrane pass occupies residues 191-211 (VSVQGIIVYRASYFGAYDTVK). Residues 212-222 (GLLPKPKKTPF) lie on the Mitochondrial intermembrane side of the membrane. The chain crosses the membrane as a helical span at residues 223–243 (LVSFFIAQVVTTCSGILSYPF). Residues 244–283 (DTVRRRMMMQSGEAKRQYKGTLDCFVKIYQHEGISSFFRG) are Mitochondrial matrix-facing. R247 is an ADP binding site. Residues 247–252 (RRRMMM) form an important for transport activity region. The Nucleotide carrier signature motif signature appears at 247–252 (RRRMMM). Residues 284–301 (AFSNVLRGTGGALVLVLY) form a helical membrane-spanning segment. The Mitochondrial intermembrane portion of the chain corresponds to 302–315 (DKIKEFFHIDIGGR).

This sequence belongs to the mitochondrial carrier (TC 2.A.29) family. In terms of assembly, monomer. As to expression, expressed in brain, liver, sperm and testis. In testis, expressed at higher level in spermatocytes, while it is expressed at lower level in spermatogonial cells. Expressed in erythrocytes (at protein level).

It is found in the mitochondrion inner membrane. Its subcellular location is the membrane. It localises to the cell projection. The protein localises to the cilium. The protein resides in the flagellum membrane. The enzyme catalyses ADP(in) + ATP(out) = ADP(out) + ATP(in). The catalysed reaction is dATP(out) + ADP(in) = dATP(in) + ADP(out). It carries out the reaction dADP(in) + ADP(out) = dADP(out) + ADP(in). It catalyses the reaction H(+)(in) = H(+)(out). The matrix-open state (m-state) is inhibited by the membrane-permeable bongkrekic acid (BKA). The cytoplasmic-open state (c-state) is inhibited by the membrane-impermeable toxic inhibitor carboxyatractyloside (CATR). Proton transporter activity is inhibited by ADP:ATP antiporter activity. In terms of biological role, ADP:ATP antiporter that mediates import of ADP into the mitochondrial matrix for ATP synthesis, and export of ATP out to fuel the cell. Cycles between the cytoplasmic-open state (c-state) and the matrix-open state (m-state): operates by the alternating access mechanism with a single substrate-binding site intermittently exposed to either the cytosolic (c-state) or matrix (m-state) side of the inner mitochondrial membrane. Specifically required during spermatogenesis, probably to mediate ADP:ATP exchange in spermatocytes. Large ATP supplies from mitochondria may be critical for normal progression of spermatogenesis during early stages of meiotic prophase I, including DNA double-strand break repair and chromosomal synapsis. In addition to its ADP:ATP antiporter activity, also involved in mitochondrial uncoupling and mitochondrial permeability transition pore (mPTP) activity. Plays a role in mitochondrial uncoupling by acting as a proton transporter: proton transport uncouples the proton flows via the electron transport chain and ATP synthase to reduce the efficiency of ATP production and cause mitochondrial thermogenesis. Proton transporter activity is inhibited by ADP:ATP antiporter activity, suggesting that SLC25A31/ANT4 acts as a master regulator of mitochondrial energy output by maintaining a delicate balance between ATP production (ADP:ATP antiporter activity) and thermogenesis (proton transporter activity). Proton transporter activity requires free fatty acids as cofactor, but does not transport it. Among nucleotides, may also exchange ADP for dATP and dADP. Also plays a key role in mPTP opening, a non-specific pore that enables free passage of the mitochondrial membranes to solutes of up to 1.5 kDa, and which contributes to cell death. It is however unclear if SLC25A31/ANT4 constitutes a pore-forming component of mPTP or regulates it. The polypeptide is ADP/ATP translocase 4 (Homo sapiens (Human)).